We begin with the raw amino-acid sequence, 89 residues long: Transcription elongation factor 1 homolog (89 aa).

C25, C28, C49, and C52 together coordinate Zn(2+).

This sequence belongs to the ELOF1 family.

The protein resides in the nucleus. Transcription elongation factor implicated in the maintenance of proper chromatin structure in actively transcribed regions. This is Transcription elongation factor 1 homolog from Oryza sativa subsp. japonica (Rice).